We begin with the raw amino-acid sequence, 329 residues long: Cathepsin K (329 aa).

A signal peptide spans 1-15 (MWGLKVLLLPVMSFA). Positions 16-114 (LYPEEILDTH…TLYIPDWEGR (99 aa)) are cleaved as a propeptide — activation peptide. N-linked (GlcNAc...) asparagine glycosylation occurs at asparagine 103. Intrachain disulfides connect cysteine 136–cysteine 177, cysteine 170–cysteine 210, and cysteine 269–cysteine 318. Residue cysteine 139 is part of the active site. Residues histidine 276 and asparagine 296 contribute to the active site.

The protein belongs to the peptidase C1 family.

It is found in the lysosome. Its subcellular location is the secreted. The protein localises to the apical cell membrane. The enzyme catalyses Broad proteolytic activity. With small-molecule substrates and inhibitors, the major determinant of specificity is P2, which is preferably Leu, Met &gt; Phe, and not Arg.. Functionally, thiol protease involved in osteoclastic bone resorption and may participate partially in the disorder of bone remodeling. Displays potent endoprotease activity against fibrinogen at acid pH. May play an important role in extracellular matrix degradation. Involved in the release of thyroid hormone thyroxine (T4) by limited proteolysis of TG/thyroglobulin in the thyroid follicle lumen. In Macaca fascicularis (Crab-eating macaque), this protein is Cathepsin K (CTSK).